The sequence spans 955 residues: 2-oxoglutarate dehydrogenase E1 component (955 aa).

It belongs to the alpha-ketoglutarate dehydrogenase family. In terms of assembly, homodimer. Part of the 2-oxoglutarate dehydrogenase (OGDH) complex composed of E1 (2-oxoglutarate dehydrogenase), E2 (dihydrolipoamide succinyltransferase) and E3 (dihydrolipoamide dehydrogenase); the complex contains multiple copies of the three enzymatic components (E1, E2 and E3). The cofactor is thiamine diphosphate.

The enzyme catalyses N(6)-[(R)-lipoyl]-L-lysyl-[protein] + 2-oxoglutarate + H(+) = N(6)-[(R)-S(8)-succinyldihydrolipoyl]-L-lysyl-[protein] + CO2. Functionally, E1 component of the 2-oxoglutarate dehydrogenase (OGDH) complex which catalyzes the decarboxylation of 2-oxoglutarate, the first step in the conversion of 2-oxoglutarate to succinyl-CoA and CO(2). The polypeptide is 2-oxoglutarate dehydrogenase E1 component (Bacillus cereus (strain AH187)).